A 61-amino-acid polypeptide reads, in one-letter code: Small ribosomal subunit protein uS14 (61 aa).

4 residues coordinate Zn(2+): cysteine 24, cysteine 27, cysteine 40, and cysteine 43.

The protein belongs to the universal ribosomal protein uS14 family. Zinc-binding uS14 subfamily. In terms of assembly, part of the 30S ribosomal subunit. Contacts proteins S3 and S10. Zn(2+) is required as a cofactor.

In terms of biological role, binds 16S rRNA, required for the assembly of 30S particles and may also be responsible for determining the conformation of the 16S rRNA at the A site. The sequence is that of Small ribosomal subunit protein uS14 from Thermosipho africanus (strain TCF52B).